The chain runs to 403 residues: Ribosomal RNA large subunit methyltransferase I (403 aa).

The region spanning 9-86 is the PUA domain; the sequence is YPRLVLSKGR…KAESIDIAFF (78 aa).

This sequence belongs to the methyltransferase superfamily. RlmI family.

It is found in the cytoplasm. The enzyme catalyses cytidine(1962) in 23S rRNA + S-adenosyl-L-methionine = 5-methylcytidine(1962) in 23S rRNA + S-adenosyl-L-homocysteine + H(+). Functionally, specifically methylates the cytosine at position 1962 (m5C1962) of 23S rRNA. This chain is Ribosomal RNA large subunit methyltransferase I, found in Salmonella gallinarum (strain 287/91 / NCTC 13346).